A 274-amino-acid chain; its full sequence is Dermonecrotic toxin LarSicTox-alphaIV1 (274 aa).

H5 is a catalytic residue. Mg(2+) contacts are provided by E25 and D27. H41 serves as the catalytic Nucleophile. Intrachain disulfides connect C45-C51 and C47-C192. Residue D85 coordinates Mg(2+).

Belongs to the arthropod phospholipase D family. Class II subfamily. Mg(2+) is required as a cofactor. As to expression, expressed by the venom gland.

It localises to the secreted. It carries out the reaction an N-(acyl)-sphingosylphosphocholine = an N-(acyl)-sphingosyl-1,3-cyclic phosphate + choline. The catalysed reaction is an N-(acyl)-sphingosylphosphoethanolamine = an N-(acyl)-sphingosyl-1,3-cyclic phosphate + ethanolamine. It catalyses the reaction a 1-acyl-sn-glycero-3-phosphocholine = a 1-acyl-sn-glycero-2,3-cyclic phosphate + choline. The enzyme catalyses a 1-acyl-sn-glycero-3-phosphoethanolamine = a 1-acyl-sn-glycero-2,3-cyclic phosphate + ethanolamine. In terms of biological role, dermonecrotic toxins cleave the phosphodiester linkage between the phosphate and headgroup of certain phospholipids (sphingolipid and lysolipid substrates), forming an alcohol (often choline) and a cyclic phosphate. This toxin acts on sphingomyelin (SM). It may also act on ceramide phosphoethanolamine (CPE), lysophosphatidylcholine (LPC) and lysophosphatidylethanolamine (LPE), but not on lysophosphatidylserine (LPS), and lysophosphatidylglycerol (LPG). It acts by transphosphatidylation, releasing exclusively cyclic phosphate products as second products. Induces dermonecrosis, hemolysis, increased vascular permeability, edema, inflammatory response, and platelet aggregation. The polypeptide is Dermonecrotic toxin LarSicTox-alphaIV1 (Loxosceles arizonica (Arizona brown spider)).